Reading from the N-terminus, the 422-residue chain is Metallocarboxypeptidase A (422 aa).

An N-terminal signal peptide occupies residues 1-17 (MRSVLSLALLAANVVTA). The propeptide at 18-112 (AVVSPFDYSG…FEAYSAGYAP (95 aa)) is activation peptide. Residues 119–419 (SYHSYQDHIS…AGTVAMLKAV (301 aa)) enclose the Peptidase M14 domain. H179 and E182 together coordinate Zn(2+). Residues 179–182 (HARE), R237, and 254–255 (NR) contribute to the substrate site. Residues C248 and C271 are joined by a disulfide bond. A Zn(2+)-binding site is contributed by H309. Position 310-311 (310-311 (SY)) interacts with substrate. E385 (proton donor/acceptor) is an active-site residue.

It belongs to the peptidase M14 family. Requires Zn(2+) as cofactor.

The protein resides in the secreted. Functionally, extracellular metalloprotease that contributes to pathogenicity. The chain is Metallocarboxypeptidase A (MCPA) from Trichophyton tonsurans (Scalp ringworm fungus).